A 122-amino-acid polypeptide reads, in one-letter code: Small ribosomal subunit protein uS13 (122 aa).

The segment at 89 to 122 is disordered; the sequence is GLRHRRGLPARGQRTKTNARTRKGPRRGVAGKRK.

It belongs to the universal ribosomal protein uS13 family. Part of the 30S ribosomal subunit. Forms a loose heterodimer with protein S19. Forms two bridges to the 50S subunit in the 70S ribosome.

Located at the top of the head of the 30S subunit, it contacts several helices of the 16S rRNA. In the 70S ribosome it contacts the 23S rRNA (bridge B1a) and protein L5 of the 50S subunit (bridge B1b), connecting the 2 subunits; these bridges are implicated in subunit movement. Contacts the tRNAs in the A and P-sites. The sequence is that of Small ribosomal subunit protein uS13 from Oleidesulfovibrio alaskensis (strain ATCC BAA-1058 / DSM 17464 / G20) (Desulfovibrio alaskensis).